Here is a 281-residue protein sequence, read N- to C-terminus: Phosphonates import ATP-binding protein PhnC 2 (281 aa).

The ABC transporter domain occupies 4 to 238 (LTVDNVTKTY…LVDDLYGNVE (235 aa)). Position 35–42 (35–42 (GESGAGKS)) interacts with ATP. Residues 243–281 (ATDNSDNSTVDTSDGTRYDTETGSDGTDEVDVIGRQVES) form a disordered region. Residues 244–255 (TDNSDNSTVDTS) show a composition bias toward low complexity.

This sequence belongs to the ABC transporter superfamily. Phosphonates importer (TC 3.A.1.9.1) family. As to quaternary structure, the complex is composed of two ATP-binding proteins (PhnC), two transmembrane proteins (PhnE) and a solute-binding protein (PhnD).

Its subcellular location is the cell membrane. The enzyme catalyses phosphonate(out) + ATP + H2O = phosphonate(in) + ADP + phosphate + H(+). In terms of biological role, part of the ABC transporter complex PhnCDE involved in phosphonates import. Responsible for energy coupling to the transport system. This Haloquadratum walsbyi (strain DSM 16790 / HBSQ001) protein is Phosphonates import ATP-binding protein PhnC 2.